A 176-amino-acid chain; its full sequence is MKATFVLACLLVIAAVSHADLLPKRMDANAFRMSFGKRSVSNPAEAKRMDPNAFRMSFGKRSAEQNEQANKEDKATSDKLYDDTKFEEMKRMDANAFRMSFGKRSDAHQAADDQVEYVNDDFSLPEQKRMDANAFRMSFGKRVNLDPNSFRMSFGKRSTVGYNLDARNYFVGLGRR.

The first 19 residues, 1–19 (MKATFVLACLLVIAAVSHA), serve as a signal peptide directing secretion. The segment at 59-79 (GKRSAEQNEQANKEDKATSDK) is disordered. Positions 61–79 (RSAEQNEQANKEDKATSDK) are enriched in basic and acidic residues.

Functionally, in AWC olfactory sensory neurons, required for the detection of preferred food sources. The polypeptide is Neuropeptide-like protein 1 (nlp-1) (Caenorhabditis elegans).